Consider the following 343-residue polypeptide: Inositol 2-dehydrogenase (343 aa).

Belongs to the Gfo/Idh/MocA family. As to quaternary structure, homotetramer.

It catalyses the reaction myo-inositol + NAD(+) = scyllo-inosose + NADH + H(+). Functionally, involved in the oxidation of myo-inositol (MI) to 2-keto-myo-inositol (2KMI or 2-inosose). The polypeptide is Inositol 2-dehydrogenase (Streptomyces avermitilis (strain ATCC 31267 / DSM 46492 / JCM 5070 / NBRC 14893 / NCIMB 12804 / NRRL 8165 / MA-4680)).